Reading from the N-terminus, the 31-residue chain is Maltose/maltodextrin import ATP-binding protein MalK (31 aa).

Belongs to the ABC transporter superfamily. Maltooligosaccharide importer (TC 3.A.1.1.1) family. The complex is composed of two ATP-binding proteins (MalK), two transmembrane proteins (MalG and MalK) and a solute-binding protein (MalE).

It is found in the cell inner membrane. It catalyses the reaction D-maltose(out) + ATP + H2O = D-maltose(in) + ADP + phosphate + H(+). In terms of biological role, part of the ABC transporter complex MalEFGK involved in maltose/maltodextrin import. Responsible for energy coupling to the transport system. The polypeptide is Maltose/maltodextrin import ATP-binding protein MalK (Photorhabdus luminescens (Xenorhabdus luminescens)).